The sequence spans 188 residues: Elongation factor P (188 aa).

It belongs to the elongation factor P family.

The protein resides in the cytoplasm. The protein operates within protein biosynthesis; polypeptide chain elongation. Involved in peptide bond synthesis. Stimulates efficient translation and peptide-bond synthesis on native or reconstituted 70S ribosomes in vitro. Probably functions indirectly by altering the affinity of the ribosome for aminoacyl-tRNA, thus increasing their reactivity as acceptors for peptidyl transferase. In Mycoplasmoides gallisepticum (strain R(low / passage 15 / clone 2)) (Mycoplasma gallisepticum), this protein is Elongation factor P.